The following is a 274-amino-acid chain: UPF0173 metal-dependent hydrolase AnaeK_1127 (274 aa).

The protein belongs to the UPF0173 family.

This chain is UPF0173 metal-dependent hydrolase AnaeK_1127, found in Anaeromyxobacter sp. (strain K).